Consider the following 203-residue polypeptide: TATA-binding protein 2 (203 aa).

Repeat copies occupy residues 28-104 (LQNI…ARII) and 118-195 (IQNI…YPVL).

The protein belongs to the TBP family. Belongs to the TFIID complex together with the TBP-associated factors (TAFs). Binds DNA as monomer. Interacts with RF2A and TFIIB. Interacts with CWZF7.

It is found in the nucleus. General transcription factor that functions at the core of the DNA-binding multiprotein factor TFIID. Binding of TFIID to the TATA box is the initial transcriptional step of the pre-initiation complex (PIC), playing a role in the activation of eukaryotic genes transcribed by RNA polymerase II. The sequence is that of TATA-binding protein 2 (TBP2) from Oryza sativa subsp. japonica (Rice).